Here is a 60-residue protein sequence, read N- to C-terminus: Large ribosomal subunit protein uL30 (60 aa).

Belongs to the universal ribosomal protein uL30 family. As to quaternary structure, part of the 50S ribosomal subunit.

In Sphingopyxis alaskensis (strain DSM 13593 / LMG 18877 / RB2256) (Sphingomonas alaskensis), this protein is Large ribosomal subunit protein uL30.